The primary structure comprises 857 residues: A-kinase anchor protein 1, mitochondrial (857 aa).

The N-terminal 29 residues, 1 to 29, are a transit peptide targeting the mitochondrion; it reads MAIQLRSLFPLALPGMLALLGWWWFFSRK. Residue serine 55 is modified to Phosphoserine. Residues 65-121 form a disordered region; that stretch reads VAPTVTQPPGREEQRCVDKPSTEPLALPRTRQVRRRSESSGNLPSVADTRSQPGPCR. Over residues 74-85 the composition is skewed to basic and acidic residues; the sequence is GREEQRCVDKPS. Phosphoserine occurs at positions 101, 103, and 164. A compositionally biased stretch (polar residues) spans 103 to 116; the sequence is SSGNLPSVADTRSQ. Disordered regions lie at residues 165–198 and 260–303; these read ALGK…GDAV and FVEP…VPEN. Positions 286-299 are enriched in basic and acidic residues; the sequence is SDRDLAGELDKDET. The interval 306–319 is PKA-RII subunit binding domain; that stretch reads IKQAAFQLISQVIL. Disordered regions lie at residues 336–437, 466–497, and 512–554; these read QVHP…NPRG, STSG…TQPF, and EDGW…QAGS. Polar residues predominate over residues 354 to 379; sequence PASQETSLGQDTSDPASTRTGATASP. Threonine 401 is modified (phosphothreonine). Over residues 466 to 482 the composition is skewed to polar residues; that stretch reads STSGLEDSCTETISSSG. The residue at position 487 (threonine 487) is a Phosphothreonine. A phosphoserine mark is found at serine 527 and serine 546. Over residues 545 to 554 the composition is skewed to polar residues; it reads DSPQSVQAGS. The region spanning 561–625 is the KH domain; the sequence is LIIWEIEVPK…HHVDKALNLI (65 aa). The region spanning 712–771 is the Tudor domain; sequence PVEITVICAAPGADGAWWRAQVVASYEETNEVEIRYVDYGGYKRVKVDVLRQIRSDFVTL.

In terms of assembly, interacts with SLC8A3. Interacts with CFAP91. Interacts with CLPB. Interacts with NDUFS1. In terms of tissue distribution, highest expression in testis, heart, liver, skeletal muscle, intestine and kidney, followed by brain and lung. No expression in spleen. Isoform 1/D-AKAP1A is expressed predominantly in testis whereas isoform 4/D-AKAP1D is expressed primarily in liver. Expression is decreased in hearts of diabetic mice (at protein level).

It localises to the mitochondrion outer membrane. The protein localises to the mitochondrion. The protein resides in the endoplasmic reticulum. In terms of biological role, differentially targeted protein that binds to type I and II regulatory subunits of protein kinase A. Anchors them to the cytoplasmic face of the mitochondrial outer membrane or allows them to reside in the endoplasmic reticulum. Involved in mitochondrial-mediated antiviral innate immunity. Promotes translocation of NDUFS1 into mitochondria to regulate mitochondrial membrane respiratory chain NADH dehydrogenase (Complex I) activity. Under diabetic conditions, myocardial AKAP1 expression decreases which blocks the translocation of NDUFS1 from the cytosol to mitochondria. Reduction of NDUFS1 in mitochondria decreases ATP production and increases mitochondrial ROS level, which causes mitochondrial dysfunction and cell apoptosis, respectively, thereby leading to cardiac dysfunction. This Mus musculus (Mouse) protein is A-kinase anchor protein 1, mitochondrial.